A 169-amino-acid polypeptide reads, in one-letter code: uncharacterized protein (169 aa).

The Nudix hydrolase domain maps to 32–162; sequence CNFRVVNSFV…EPAKSDLIKL (131 aa). The short motif at 69-91 is the Nudix box element; sequence GGHVESGETYEDALQRELEEELN. Residues Glu85 and Glu89 each contribute to the Mg(2+) site.

It belongs to the Nudix hydrolase family. Requires Mg(2+) as cofactor.

This is an uncharacterized protein from Nostoc sp. (strain PCC 7120 / SAG 25.82 / UTEX 2576).